Consider the following 252-residue polypeptide: MQLTRCCFVFLVQGSLYLVICGQEDGPPGSEDPEHDDHEGQPRPRVPRKRGHISPKSRPLANSTLLGLLAPPGEVWGILGQPPNRPKQSPLPSTKVKKIFGWGDFYSNIKTVALNLLVTGKIVDHGNGTFSVHFRHNATGQGNISISLVPPSKAVEFHQEQQIFIEAKASKIFNCRMEWEKVERGRRTSLCTHDPAKICSRDHAQSSATWSCSQPFKIVCVYIAFYSTDYRLVQKVCPDYNYHSDTPYYPSG.

An N-terminal signal peptide occupies residues 1-22 (MQLTRCCFVFLVQGSLYLVICG). Positions 23–75 (QEDGPPGSEDPEHDDHEGQPRPRVPRKRGHISPKSRPLANSTLLGLLAPPGEV) are II. The tract at residues 27 to 59 (PPGSEDPEHDDHEGQPRPRVPRKRGHISPKSRP) is disordered. Residues 45-55 (RVPRKRGHISP) show a composition bias toward basic residues. Residues Asn62, Asn127, Asn137, and Asn143 are each glycosylated (N-linked (GlcNAc...) asparagine). The III stretch occupies residues 76-157 (WGILGQPPNR…LVPPSKAVEF (82 aa)). Positions 158-166 (HQEQQIFIE) are IV (linker domain). Residues 167–252 (AKASKIFNCR…HSDTPYYPSG (86 aa)) form a v (Cys-rich) region.

The protein belongs to the neurexophilin family. In terms of processing, may be proteolytically processed at the boundary between the N-terminal non-conserved and the central conserved domain in neuron-like cells. As to expression, brain. Detected in several other tissues.

It is found in the secreted. Its function is as follows. May be signaling molecules that resemble neuropeptides. Ligand for alpha-neurexins. In Rattus norvegicus (Rat), this protein is Neurexophilin-3 (Nxph3).